Reading from the N-terminus, the 315-residue chain is MIEIEKPKVDIVELSEDYRYGKFVIEPLERGYGITIGNALRRILLSSLPGVAVNAIKIDGVLHEFSTIPGVKEDVTEIILTLKELSATIDGEGSRTLKIEAQGPCSITGADIICPPDVEILSKDLAIATLDDNAKLNMEIFVDKGRGYVSAEENKTENVPIGVLPVDSIYTPVEKVSYHVENTRVGQKTDYDKLVLEVWTNGSINPQEGISLAAKVLVEHLNLFIDLTEHVSSVEIMVEKEEDQKEKVLEMTIEELDLSVRSYNCLKRAGINTVEELANKSEDDMMKVRNLGKKSLEEVIQKLEELGLGLKPSEE.

Residues 1 to 228 (MIEIEKPKVD…EHLNLFIDLT (228 aa)) form an alpha N-terminal domain (alpha-NTD) region. Residues 245 to 315 (KEKVLEMTIE…LGLGLKPSEE (71 aa)) form an alpha C-terminal domain (alpha-CTD) region.

Belongs to the RNA polymerase alpha chain family. As to quaternary structure, homodimer. The RNAP catalytic core consists of 2 alpha, 1 beta, 1 beta' and 1 omega subunit. When a sigma factor is associated with the core the holoenzyme is formed, which can initiate transcription.

It carries out the reaction RNA(n) + a ribonucleoside 5'-triphosphate = RNA(n+1) + diphosphate. DNA-dependent RNA polymerase catalyzes the transcription of DNA into RNA using the four ribonucleoside triphosphates as substrates. This chain is DNA-directed RNA polymerase subunit alpha, found in Clostridioides difficile (strain 630) (Peptoclostridium difficile).